The chain runs to 305 residues: UDP-3-O-acyl-N-acetylglucosamine deacetylase (305 aa).

H78, H237, and D241 together coordinate Zn(2+). H264 serves as the catalytic Proton donor.

It belongs to the LpxC family. The cofactor is Zn(2+).

It catalyses the reaction a UDP-3-O-[(3R)-3-hydroxyacyl]-N-acetyl-alpha-D-glucosamine + H2O = a UDP-3-O-[(3R)-3-hydroxyacyl]-alpha-D-glucosamine + acetate. The protein operates within glycolipid biosynthesis; lipid IV(A) biosynthesis; lipid IV(A) from (3R)-3-hydroxytetradecanoyl-[acyl-carrier-protein] and UDP-N-acetyl-alpha-D-glucosamine: step 2/6. Its function is as follows. Catalyzes the hydrolysis of UDP-3-O-myristoyl-N-acetylglucosamine to form UDP-3-O-myristoylglucosamine and acetate, the committed step in lipid A biosynthesis. This is UDP-3-O-acyl-N-acetylglucosamine deacetylase from Paraburkholderia phytofirmans (strain DSM 17436 / LMG 22146 / PsJN) (Burkholderia phytofirmans).